Here is a 111-residue protein sequence, read N- to C-terminus: Cytochrome c3, 26 kDa (111 aa).

Positions 30, 33, 38, 41, 42, 43, 54, 59, 60, 77, 86, 89, 90, 105, 108, and 109 each coordinate heme c.

In terms of assembly, homodimer. Heme c serves as cofactor.

The protein localises to the periplasm. Its function is as follows. Participates in sulfate respiration coupled with phosphorylation by transferring electrons from the enzyme dehydrogenase to ferredoxin. In Desulfomicrobium norvegicum (strain DSM 1741 / NCIMB 8310) (Desulfovibrio baculatus (strain Norway 4)), this protein is Cytochrome c3, 26 kDa.